The primary structure comprises 502 residues: Probable cytosol aminopeptidase (502 aa).

Residues lysine 269 and aspartate 274 each coordinate Mn(2+). Residue lysine 281 is part of the active site. 3 residues coordinate Mn(2+): aspartate 292, aspartate 351, and glutamate 353. Arginine 355 is an active-site residue.

It belongs to the peptidase M17 family. It depends on Mn(2+) as a cofactor.

It is found in the cytoplasm. The catalysed reaction is Release of an N-terminal amino acid, Xaa-|-Yaa-, in which Xaa is preferably Leu, but may be other amino acids including Pro although not Arg or Lys, and Yaa may be Pro. Amino acid amides and methyl esters are also readily hydrolyzed, but rates on arylamides are exceedingly low.. The enzyme catalyses Release of an N-terminal amino acid, preferentially leucine, but not glutamic or aspartic acids.. In terms of biological role, presumably involved in the processing and regular turnover of intracellular proteins. Catalyzes the removal of unsubstituted N-terminal amino acids from various peptides. This Vibrio vulnificus (strain CMCP6) protein is Probable cytosol aminopeptidase.